A 380-amino-acid chain; its full sequence is Cyclohexane-1-carbonyl-CoA dehydrogenase (380 aa).

Belongs to the acyl-CoA dehydrogenase family. As to quaternary structure, homotetramer. Requires FAD as cofactor.

The enzyme catalyses cyclohexane-1-carbonyl-CoA + oxidized [electron-transfer flavoprotein] + H(+) = cyclohex-1-ene-1-carbonyl-CoA + reduced [electron-transfer flavoprotein]. Acyl-CoA dehydrogenase involved in the anaerobic degradation of cyclohexane carboxylic acid (CHC). Catalyzes the 1,2-dehydrogenation of cyclohexane-1-carbonyl-CoA (CHCoA) to cyclohex-1-ene-1-carbonyl-CoA (CHeneCoA). An alternative substrate, cyclohex-3-ene-1-carboxyl-CoA can be converted to the corresponding cyclohexadiene-1-carboxyl-CoA isomers (30% rate compared to CHC). In Geobacter metallireducens (strain ATCC 53774 / DSM 7210 / GS-15), this protein is Cyclohexane-1-carbonyl-CoA dehydrogenase.